Consider the following 157-residue polypeptide: Oocyte zinc finger protein XlCOF2 (157 aa).

C2H2-type zinc fingers lie at residues 6-28, 34-56, 79-101, 107-129, and 135-157; these read FTCT…MRIH, YSCA…QKNP, FTCT…QRLH, FSCA…QNTH, and FTCT…QKIH.

Belongs to the krueppel C2H2-type zinc-finger protein family.

It localises to the nucleus. Functionally, may be involved in transcriptional regulation. In Xenopus laevis (African clawed frog), this protein is Oocyte zinc finger protein XlCOF2.